The chain runs to 1210 residues: Multimerin-1 (1210 aa).

The N-terminal stretch at 1–19 (MLGLKFLVLLSILWGRVFR) is a signal peptide. Residues 57 to 102 (ATQNPSTQGPAAAERSSEDDVLLQSTSQPSETSTPPEGRHQTPLEK) are disordered. Positions 80–92 (QSTSQPSETSTPP) are enriched in low complexity. The N-linked (GlcNAc...) asparagine glycan is linked to asparagine 133. The span at 143–155 (SRKSDQQEVSTKS) shows a compositional bias: polar residues. Positions 143 to 190 (SRKSDQQEVSTKSAGDMGNRSARETHLRRSDNSRNQRPSYQKPSFETT) are disordered. Asparagine 161 is a glycosylation site (N-linked (GlcNAc...) asparagine). Basic and acidic residues predominate over residues 163-176 (SARETHLRRSDNSR). The span at 177-189 (NQRPSYQKPSFET) shows a compositional bias: polar residues. Residues 192–267 (GKNWCAHVHT…PGYIGPNCQL (76 aa)) enclose the EMI domain. 3 disulfides stabilise this stretch: cysteine 196-cysteine 257, cysteine 222-cysteine 230, and cysteine 256-cysteine 265. Threonine 201 carries an O-linked (Fuc) threonine glycan. An O-linked (Fuc) threonine glycan is attached at threonine 250. The interval 276–299 (AHSNQAESHTAVDQGRAQQQKQDC) is disordered. Residues 303-338 (AMIQKLAEQLSQQERKLSLLQKKVDNASLVADDMRN) adopt a coiled-coil conformation. Residues asparagine 328, asparagine 415, asparagine 491, asparagine 525, asparagine 560, asparagine 602, asparagine 712, asparagine 765, asparagine 810, asparagine 822, asparagine 903, asparagine 915, asparagine 963, and asparagine 1000 are each glycosylated (N-linked (GlcNAc...) asparagine). Residues 564-690 (LLEMEKESAR…RHNLLRNEVQ (127 aa)) adopt a coiled-coil conformation. Residues 809–846 (FNETTSQVNKCQQNMSHLEENMLSVTKTAKEFETRLQG) are a coiled coil. The EGF-like domain maps to 1023-1059 (EHSSCSSFPCQNGGTCISGRSNFICACRHPFMGDTCT). 3 disulfides stabilise this stretch: cysteine 1027-cysteine 1038, cysteine 1032-cysteine 1047, and cysteine 1049-cysteine 1058. An O-linked (Fuc) threonine glycan is attached at threonine 1037. The region spanning 1078–1210 (RYAPMVAFFV…TFSGYLLYRT (133 aa)) is the C1q domain.

In terms of assembly, multimeric. Composed of varying sized, disulfide-linked multimers, the smallest of which is a homotrimer. Proteolysis of the promultimerin in the N-terminal region, leads to the mature p155 form that is stored in platelets. Interacts with factor V/Va. In terms of processing, extensively N-glycosylated. Post-translationally, O-fucosylated within the EMI domain (at Thr-201 and Thr-250) by FUT10/POFUT3 and FUT11/POFUT4. O-fucosylation at Thr-201 and Thr-1037 are required for facilitating protein folding and secretion.

It localises to the secreted. Its function is as follows. Carrier protein for platelet (but not plasma) factor V/Va. Plays a role in the storage and stabilization of factor V in platelets. Upon release following platelet activation, may limit platelet and plasma factor Va-dependent thrombin generation. Ligand for integrin alpha-IIb/beta-3 and integrin alpha-V/beta-3 on activated platelets, and may function as an extracellular matrix or adhesive protein. This chain is Multimerin-1, found in Mus musculus (Mouse).